The primary structure comprises 216 residues: Cytidylate kinase (216 aa).

7 to 15 (GPAASGKGT) contacts ATP.

It belongs to the cytidylate kinase family. Type 1 subfamily.

The protein resides in the cytoplasm. The enzyme catalyses CMP + ATP = CDP + ADP. The catalysed reaction is dCMP + ATP = dCDP + ADP. The protein is Cytidylate kinase of Methylocella silvestris (strain DSM 15510 / CIP 108128 / LMG 27833 / NCIMB 13906 / BL2).